Reading from the N-terminus, the 76-residue chain is Tautomerase PptA (76 aa).

Catalysis depends on proline 2, which acts as the Proton acceptor; via imino nitrogen.

It belongs to the 4-oxalocrotonate tautomerase family. PptA subfamily. In terms of assembly, homodimer.

It localises to the cytoplasm. In Pectobacterium atrosepticum (strain SCRI 1043 / ATCC BAA-672) (Erwinia carotovora subsp. atroseptica), this protein is Tautomerase PptA.